The following is a 125-amino-acid chain: Large ribosomal subunit protein uL22 (125 aa).

Belongs to the universal ribosomal protein uL22 family. Part of the 50S ribosomal subunit.

Functionally, this protein binds specifically to 23S rRNA; its binding is stimulated by other ribosomal proteins, e.g. L4, L17, and L20. It is important during the early stages of 50S assembly. It makes multiple contacts with different domains of the 23S rRNA in the assembled 50S subunit and ribosome. The globular domain of the protein is located near the polypeptide exit tunnel on the outside of the subunit, while an extended beta-hairpin is found that lines the wall of the exit tunnel in the center of the 70S ribosome. In Erythrobacter litoralis (strain HTCC2594), this protein is Large ribosomal subunit protein uL22.